The following is a 237-amino-acid chain: Methylosome subunit pICln (237 aa).

Ser-2 bears the N-acetylserine mark. Ser-102, Ser-144, Ser-193, and Ser-195 each carry phosphoserine. The residue at position 223 (Thr-223) is a Phosphothreonine.

Belongs to the pICln (TC 1.A.47) family. As to quaternary structure, component of the methylosome, a 20S complex containing at least PRMT5/SKB1, WDR77/MEP50 and CLNS1A/pICln. May mediate SNRPD1 and SNRPD3 methylation. Forms a 6S pICln-Sm complex composed of CLNS1A/pICln, SNRPD1, SNRPD2, SNRPE, SNRPF and SNRPG; ring-like structure where CLNS1A/pICln mimics additional Sm proteins and which is unable to assemble into the core snRNP. Interacts with LSM10 and LSM11.

The protein resides in the cytoplasm. It is found in the cytosol. Its subcellular location is the nucleus. The protein localises to the cytoskeleton. Its function is as follows. Involved in both the assembly of spliceosomal snRNPs and the methylation of Sm proteins. Chaperone that regulates the assembly of spliceosomal U1, U2, U4 and U5 small nuclear ribonucleoproteins (snRNPs), the building blocks of the spliceosome, and thereby plays an important role in the splicing of cellular pre-mRNAs. Most spliceosomal snRNPs contain a common set of Sm proteins SNRPB, SNRPD1, SNRPD2, SNRPD3, SNRPE, SNRPF and SNRPG that assemble in a heptameric protein ring on the Sm site of the small nuclear RNA to form the core snRNP (Sm core). In the cytosol, the Sm proteins SNRPD1, SNRPD2, SNRPE, SNRPF and SNRPG are trapped in an inactive 6S pICln-Sm complex by the chaperone CLNS1A that controls the assembly of the core snRNP. Dissociation by the SMN complex of CLNS1A from the trapped Sm proteins and their transfer to an SMN-Sm complex triggers the assembly of core snRNPs and their transport to the nucleus. This chain is Methylosome subunit pICln (CLNS1A), found in Pongo abelii (Sumatran orangutan).